We begin with the raw amino-acid sequence, 343 residues long: CRISPR-associated endonuclease Cas1 1 (343 aa).

Positions 166, 234, and 249 each coordinate Mn(2+).

The protein belongs to the CRISPR-associated endonuclease Cas1 family. Homodimer, forms a heterotetramer with a Cas2 homodimer. The cofactor is Mg(2+). Mn(2+) serves as cofactor.

In terms of biological role, CRISPR (clustered regularly interspaced short palindromic repeat), is an adaptive immune system that provides protection against mobile genetic elements (viruses, transposable elements and conjugative plasmids). CRISPR clusters contain spacers, sequences complementary to antecedent mobile elements, and target invading nucleic acids. CRISPR clusters are transcribed and processed into CRISPR RNA (crRNA). Acts as a dsDNA endonuclease. Involved in the integration of spacer DNA into the CRISPR cassette. This Chlorobaculum tepidum (strain ATCC 49652 / DSM 12025 / NBRC 103806 / TLS) (Chlorobium tepidum) protein is CRISPR-associated endonuclease Cas1 1.